The primary structure comprises 430 residues: Glutamate-1-semialdehyde 2,1-aminomutase (430 aa).

The residue at position 269 (K269) is an N6-(pyridoxal phosphate)lysine.

This sequence belongs to the class-III pyridoxal-phosphate-dependent aminotransferase family. HemL subfamily. In terms of assembly, homodimer. It depends on pyridoxal 5'-phosphate as a cofactor.

It is found in the cytoplasm. It carries out the reaction (S)-4-amino-5-oxopentanoate = 5-aminolevulinate. It participates in porphyrin-containing compound metabolism; protoporphyrin-IX biosynthesis; 5-aminolevulinate from L-glutamyl-tRNA(Glu): step 2/2. The chain is Glutamate-1-semialdehyde 2,1-aminomutase from Desulfitobacterium hafniense (strain DSM 10664 / DCB-2).